The chain runs to 231 residues: Ureidoacrylate amidohydrolase RutB (231 aa).

Catalysis depends on aspartate 25, which acts as the Proton acceptor. The active site involves lysine 134. The Nucleophile role is filled by cysteine 167.

The protein belongs to the isochorismatase family. RutB subfamily.

The catalysed reaction is (Z)-3-ureidoacrylate + H2O + H(+) = (Z)-3-aminoacrylate + NH4(+) + CO2. The enzyme catalyses (Z)-3-ureidoacrylate + H2O = (Z)-3-aminoacrylate + carbamate + H(+). It carries out the reaction (Z)-2-methylureidoacrylate + H2O + H(+) = (Z)-2-methylaminoacrylate + NH4(+) + CO2. Hydrolyzes ureidoacrylate to form aminoacrylate and carbamate. The carbamate hydrolyzes spontaneously, thereby releasing one of the nitrogen atoms of the pyrimidine ring as ammonia and one of its carbon atoms as CO2. This chain is Ureidoacrylate amidohydrolase RutB, found in Escherichia coli O9:H4 (strain HS).